A 318-amino-acid polypeptide reads, in one-letter code: NADH-ubiquinone oxidoreductase chain 1 (318 aa).

A run of 8 helical transmembrane segments spans residues 2 to 22, 68 to 88, 100 to 120, 147 to 167, 171 to 191, 217 to 237, 254 to 273, and 294 to 314; these read FMLN…FLTL, ITMF…MWIP, LGVL…LWSG, AIIL…TLII, YIWL…STLA, GGPF…MNAL, LYTT…FLWI, and LPLT…MAGI.

It belongs to the complex I subunit 1 family.

The protein localises to the mitochondrion inner membrane. The catalysed reaction is a ubiquinone + NADH + 5 H(+)(in) = a ubiquinol + NAD(+) + 4 H(+)(out). Its function is as follows. Core subunit of the mitochondrial membrane respiratory chain NADH dehydrogenase (Complex I) that is believed to belong to the minimal assembly required for catalysis. Complex I functions in the transfer of electrons from NADH to the respiratory chain. The immediate electron acceptor for the enzyme is believed to be ubiquinone. The polypeptide is NADH-ubiquinone oxidoreductase chain 1 (MT-ND1) (Hsunycteris thomasi (Thomas's nectar bat)).